A 173-amino-acid chain; its full sequence is Alpha-crystallin A chain (173 aa).

At M1 the chain carries N-acetylmethionine. The required for complex formation with BFSP1 and BFSP2 stretch occupies residues 1 to 63; the sequence is MDIAIQHPWF…RSVLDSGVSE (63 aa). Q6 carries the deamidated glutamine; partial modification. Residue S45 is modified to Phosphoserine. Q50 carries the post-translational modification Deamidated glutamine; partial. A sHSP domain is found at 52-162; that stretch reads LFRSVLDSGV…GHSERAIPVS (111 aa). K70 bears the N6-acetyllysine mark. Q90 bears the Deamidated glutamine; partial mark. K99 is modified (N6-acetyllysine). Residue H100 participates in Zn(2+) binding. Position 101 is a deamidated asparagine; partial (N101). Zn(2+) contacts are provided by E102 and H107. Residue S122 is modified to Phosphoserine. N123 is subject to Deamidated asparagine; partial. The interval 144 to 173 is disordered; the sequence is PKIPSGMDAGHSERAIPVSREEKPSSAPSS. Positions 153 to 167 are enriched in basic and acidic residues; the sequence is GHSERAIPVSREEKP. H154 is a binding site for Zn(2+). O-linked (GlcNAc) serine glycosylation is present at S162.

It belongs to the small heat shock protein (HSP20) family. In terms of assembly, heteromer composed of three CRYAA and one CRYAB subunits. Inter-subunit bridging via zinc ions enhances stability, which is crucial as there is no protein turn over in the lens. Can also form homodimers and homotetramers (dimers of dimers) which serve as the building blocks of homooligomers. Within homooligomers, the zinc-binding motif is created from residues of 3 different molecules. His-100 and Glu-102 from one molecule are ligands of the zinc ion, and His-107 and His-154 residues from additional molecules complete the site with tetrahedral coordination geometry. Part of a complex required for lens intermediate filament formation composed of BFSP1, BFSP2 and CRYAA. Acetylation at Lys-70 may increase chaperone activity. Post-translationally, undergoes age-dependent proteolytical cleavage at the C-terminus.

Its subcellular location is the cytoplasm. It localises to the nucleus. In terms of biological role, contributes to the transparency and refractive index of the lens. Acts as a chaperone, preventing aggregation of various proteins under a wide range of stress conditions. Required for the correct formation of lens intermediate filaments as part of a complex composed of BFSP1, BFSP2 and CRYAA. In Ceratotherium simum (White rhinoceros), this protein is Alpha-crystallin A chain (CRYAA).